The following is a 207-amino-acid chain: Probable flagellin 2 (207 aa).

The propeptide occupies 1–14 (MRVGSRKLRRDEKG).

It belongs to the archaeal flagellin family.

It localises to the archaeal flagellum. Its function is as follows. Flagellin is the subunit protein which polymerizes to form the filaments of archaeal flagella. In Archaeoglobus fulgidus (strain ATCC 49558 / DSM 4304 / JCM 9628 / NBRC 100126 / VC-16), this protein is Probable flagellin 2 (flaB2).